A 438-amino-acid chain; its full sequence is V-type ATP synthase beta chain (438 aa).

Belongs to the ATPase alpha/beta chains family.

Its function is as follows. Produces ATP from ADP in the presence of a proton gradient across the membrane. The V-type beta chain is a regulatory subunit. The polypeptide is V-type ATP synthase beta chain (Chlamydia felis (strain Fe/C-56) (Chlamydophila felis)).